The primary structure comprises 278 residues: Octanoyl-[GcvH]:protein N-octanoyltransferase (278 aa).

The region spanning 41–247 is the BPL/LPL catalytic domain; that stretch reads LVSPPTIRTW…LLHRLAGEVH (207 aa). Residue cysteine 146 is the Acyl-thioester intermediate of the active site.

The protein belongs to the octanoyltransferase LipL family.

It catalyses the reaction N(6)-octanoyl-L-lysyl-[glycine-cleavage complex H protein] + L-lysyl-[lipoyl-carrier protein] = N(6)-octanoyl-L-lysyl-[lipoyl-carrier protein] + L-lysyl-[glycine-cleavage complex H protein]. The protein operates within protein modification; protein lipoylation via endogenous pathway; protein N(6)-(lipoyl)lysine from octanoyl-[acyl-carrier-protein]. Catalyzes the amidotransfer (transamidation) of the octanoyl moiety from octanoyl-GcvH to the lipoyl domain of the E2 subunit of lipoate-dependent enzymes. The chain is Octanoyl-[GcvH]:protein N-octanoyltransferase from Lysinibacillus sphaericus (strain C3-41).